A 343-amino-acid polypeptide reads, in one-letter code: N-acetyl-gamma-glutamyl-phosphate reductase (343 aa).

Cys147 is an active-site residue.

Belongs to the NAGSA dehydrogenase family. Type 1 subfamily.

It is found in the cytoplasm. The catalysed reaction is N-acetyl-L-glutamate 5-semialdehyde + phosphate + NADP(+) = N-acetyl-L-glutamyl 5-phosphate + NADPH + H(+). It functions in the pathway amino-acid biosynthesis; L-arginine biosynthesis; N(2)-acetyl-L-ornithine from L-glutamate: step 3/4. Catalyzes the NADPH-dependent reduction of N-acetyl-5-glutamyl phosphate to yield N-acetyl-L-glutamate 5-semialdehyde. The protein is N-acetyl-gamma-glutamyl-phosphate reductase of Listeria monocytogenes serovar 1/2a (strain ATCC BAA-679 / EGD-e).